The primary structure comprises 430 residues: Enolase (430 aa).

Gln-167 lines the (2R)-2-phosphoglycerate pocket. The active-site Proton donor is the Glu-209. Residues Asp-246, Glu-287, and Asp-314 each coordinate Mg(2+). (2R)-2-phosphoglycerate-binding residues include Lys-339, Arg-368, Ser-369, and Lys-390. Lys-339 serves as the catalytic Proton acceptor.

This sequence belongs to the enolase family. The cofactor is Mg(2+).

Its subcellular location is the cytoplasm. It is found in the secreted. The protein resides in the cell surface. It catalyses the reaction (2R)-2-phosphoglycerate = phosphoenolpyruvate + H2O. Its pathway is carbohydrate degradation; glycolysis; pyruvate from D-glyceraldehyde 3-phosphate: step 4/5. Its function is as follows. Catalyzes the reversible conversion of 2-phosphoglycerate (2-PG) into phosphoenolpyruvate (PEP). It is essential for the degradation of carbohydrates via glycolysis. This Prochlorococcus marinus (strain MIT 9215) protein is Enolase.